The chain runs to 101 residues: Large ribosomal subunit protein uL24 (101 aa).

It belongs to the universal ribosomal protein uL24 family. Part of the 50S ribosomal subunit.

One of two assembly initiator proteins, it binds directly to the 5'-end of the 23S rRNA, where it nucleates assembly of the 50S subunit. Its function is as follows. One of the proteins that surrounds the polypeptide exit tunnel on the outside of the subunit. The polypeptide is Large ribosomal subunit protein uL24 (Borrelia hermsii (strain HS1 / DAH)).